The sequence spans 279 residues: MISGSPPDSTPSHHHFSLKRPCILLTNDDGVNSEGLWAAYDALFEWADVVVCAPATQQSAVGRSLSIFEPLRVNTVSRGDITAYAVGGKPTDSVILALFALGVKPDLVVSGINIGENLSYEAITTSGTVGAALEAANHGYPAVAFSLQIEDQKEKFDDARHLADRFSESKGVVRDVIRRILEKGFPSFTHVMNVNIPSIITGGYEITHLAEHLFITGVEKRLDPRGKPYYWINGPLVTDAPEGTDVHAIHKGNISITPITLDCTAYAGTDDLRRLFSLE.

A divalent metal cation-binding residues include D28, D29, S59, and N113.

It belongs to the SurE nucleotidase family. A divalent metal cation serves as cofactor.

It localises to the cytoplasm. The enzyme catalyses a ribonucleoside 5'-phosphate + H2O = a ribonucleoside + phosphate. Functionally, nucleotidase that shows phosphatase activity on nucleoside 5'-monophosphates. This is 5'-nucleotidase SurE from Methanospirillum hungatei JF-1 (strain ATCC 27890 / DSM 864 / NBRC 100397 / JF-1).